The primary structure comprises 529 residues: Aldehyde dehydrogenase 1 (529 aa).

251 to 256 (GSTYVG) serves as a coordination point for NAD(+). Catalysis depends on residues Glu273 and Cys307.

It belongs to the aldehyde dehydrogenase family.

It carries out the reaction an aldehyde + NAD(+) + H2O = a carboxylate + NADH + 2 H(+). The protein is Aldehyde dehydrogenase 1 of Entamoeba histolytica (strain ATCC 30459 / HM-1:IMSS / ABRM).